Consider the following 93-residue polypeptide: RNA-binding protein Hfq (93 aa).

One can recognise a Sm domain in the interval 11–71 (DVFLNHVRKS…ISTVMPGAPI (61 aa)).

This sequence belongs to the Hfq family. In terms of assembly, homohexamer.

RNA chaperone that binds small regulatory RNA (sRNAs) and mRNAs to facilitate mRNA translational regulation in response to envelope stress, environmental stress and changes in metabolite concentrations. Also binds with high specificity to tRNAs. The protein is RNA-binding protein Hfq of Granulibacter bethesdensis (strain ATCC BAA-1260 / CGDNIH1).